The primary structure comprises 2108 residues: Mycocerosic acid synthase-like polyketide synthase (2108 aa).

The first 23 residues, 1–23 (MGKERTKTVDRTRVTPVAVIGMG), serve as a signal peptide directing secretion. C24 carries N-palmitoyl cysteine lipidation. C24 carries the S-diacylglycerol cysteine lipid modification. The Ketosynthase family 3 (KS3) domain occupies 24 to 436 (CRLPGGIDSP…GTNVHAIVEQ (413 aa)). C185 (acyl-thioester intermediate; for beta-ketoacyl synthase activity) is an active-site residue. Catalysis depends on for beta-ketoacyl synthase activity residues H320 and H356. The tract at residues 438 to 542 (PVPAPESGAP…PYPPAVGQDD (105 aa)) is linker domain (LD). The tract at residues 543-842 (RGPVWVFSGQ…AAALAGMRRE (300 aa)) is acyltransferase (AT). The active-site Acyl-ester intermediate; for acyltransferase activity is S634. The dehydratase (DH) stretch occupies residues 900–1184 (NTVAVHPLLG…LAVRGLQLGT (285 aa)). The interval 905–1025 (HPLLGSHVRL…AVLHVVREAD (121 aa)) is N-terminal hotdog fold. One can recognise a PKS/mFAS DH domain in the interval 905 to 1191 (HPLLGSHVRL…LGTGASQASE (287 aa)). H938 (proton acceptor; for dehydratase activity) is an active-site residue. The segment at 1044–1191 (PHKVDGAEVR…LGTGASQASE (148 aa)) is C-terminal hotdog fold. The Proton donor; for dehydratase activity role is filled by D1108. A pseudo beta-ketoacyl reductase (PsiKR) region spans residues 1220–1391 (AWLLISTCDA…SGEDETAWRN (172 aa)). The tract at residues 1419–1743 (AGMRLQIRTP…EHTGKLILDV (325 aa)) is enoylreductase (ER). A beta-ketoacyl reductase (KR) region spans residues 1765–2004 (GSYIITGGLG…HSPFAEKFQS (240 aa)). Residues 1773–1776 (LGGL), 1796–1799 (SRSQ), 1824–1825 (DI), and 1897–1898 (FS) each bind NADP(+). The 77-residue stretch at 2025-2101 (EEWPDRLRRL…DLMCDKLAAD (77 aa)) folds into the Carrier domain. S2060 is subject to O-(pantetheine 4'-phosphoryl)serine.

In terms of assembly, homodimer.

The protein resides in the cell membrane. It participates in lipid metabolism; fatty acid biosynthesis. Functionally, polyketide synthase likely involved in the biosynthesis of a polymethyl-branched fatty acid (PMB-FA) that might only be produced during host infection. Is required for the full virulence of M.tuberculosis during host infection. The chain is Mycocerosic acid synthase-like polyketide synthase from Mycobacterium tuberculosis (strain ATCC 25618 / H37Rv).